A 292-amino-acid polypeptide reads, in one-letter code: NAD kinase (292 aa).

Residue Asp-73 is the Proton acceptor of the active site. NAD(+) is bound by residues 73-74, 147-148, His-158, Arg-175, Asp-177, 188-193, and Gln-247; these read DG, NE, and TAYSLS.

This sequence belongs to the NAD kinase family. Requires a divalent metal cation as cofactor.

It is found in the cytoplasm. It catalyses the reaction NAD(+) + ATP = ADP + NADP(+) + H(+). Its function is as follows. Involved in the regulation of the intracellular balance of NAD and NADP, and is a key enzyme in the biosynthesis of NADP. Catalyzes specifically the phosphorylation on 2'-hydroxyl of the adenosine moiety of NAD to yield NADP. This Shigella boydii serotype 4 (strain Sb227) protein is NAD kinase.